The following is a 388-amino-acid chain: Dipeptidase verJ (388 aa).

Zn(2+)-binding residues include histidine 29, aspartate 31, and glutamate 142. Substrate is bound by residues histidine 169, arginine 243, and aspartate 300.

Belongs to the metallo-dependent hydrolases superfamily. Peptidase M19 family. Zn(2+) serves as cofactor.

It catalyses the reaction an L-aminoacyl-L-amino acid + H2O = 2 an L-alpha-amino acid. The protein operates within mycotoxin biosynthesis. Its function is as follows. Dipeptidase; part of the gene cluster that mediates the biosynthesis of 11'-deoxyverticillin A, one of the dimeric epipolythiodioxopiperazines (ETPs) from the verticillin family that act as mycotoxins. 11'-deoxyverticillin A is required for normal conidiation. The nonribosomal peptide synthetase verP is speculated to be responsible for condensation of amino acids to form the carbon skeleton of verticillin, whereas the cluster-specific tailoring enzymes are involved in further modifications leading to the production of 11'-deoxyverticillin A. This chain is Dipeptidase verJ, found in Clonostachys rogersoniana.